The chain runs to 596 residues: Elongation factor 4 (596 aa).

Residues 2–184 (KHIRNFSIIA…VIVEQIPPPE (183 aa)) enclose the tr-type G domain. Residues 14–19 (DHGKST) and 131–134 (NKID) each bind GTP.

The protein belongs to the TRAFAC class translation factor GTPase superfamily. Classic translation factor GTPase family. LepA subfamily.

It localises to the cell inner membrane. It catalyses the reaction GTP + H2O = GDP + phosphate + H(+). Required for accurate and efficient protein synthesis under certain stress conditions. May act as a fidelity factor of the translation reaction, by catalyzing a one-codon backward translocation of tRNAs on improperly translocated ribosomes. Back-translocation proceeds from a post-translocation (POST) complex to a pre-translocation (PRE) complex, thus giving elongation factor G a second chance to translocate the tRNAs correctly. Binds to ribosomes in a GTP-dependent manner. This is Elongation factor 4 from Shewanella pealeana (strain ATCC 700345 / ANG-SQ1).